Reading from the N-terminus, the 131-residue chain is Small ribosomal subunit protein eS24 (131 aa).

The disordered stretch occupies residues R93–K131. Over residues K101–K121 the composition is skewed to basic residues.

Belongs to the eukaryotic ribosomal protein eS24 family. In terms of assembly, component of the small ribosomal subunit. Part of the small subunit (SSU) processome, composed of more than 70 proteins and the RNA chaperone small nucleolar RNA (snoRNA) U3.

It localises to the cytoplasm. The protein resides in the nucleus. It is found in the nucleolus. Functionally, component of the small ribosomal subunit. The ribosome is a large ribonucleoprotein complex responsible for the synthesis of proteins in the cell. Required for processing of pre-rRNA and maturation of 40S ribosomal subunits. Part of the small subunit (SSU) processome, first precursor of the small eukaryotic ribosomal subunit. During the assembly of the SSU processome in the nucleolus, many ribosome biogenesis factors, an RNA chaperone and ribosomal proteins associate with the nascent pre-rRNA and work in concert to generate RNA folding, modifications, rearrangements and cleavage as well as targeted degradation of pre-ribosomal RNA by the RNA exosome. The polypeptide is Small ribosomal subunit protein eS24 (rps24) (Ictalurus punctatus (Channel catfish)).